A 102-amino-acid chain; its full sequence is Gastrin/cholecystokinin-like peptide (102 aa).

The N-terminal stretch at 1–20 (MDKKVCVSILLAMLAIAALC) is a signal peptide. A propeptide spanning residues 21–45 (RPMTELESARHGAQRKNSISDVSRR) is cleaved from the precursor. Position 86 is a sulfotyrosine (Tyr86). Phe92 carries the phenylalanine amide modification. A propeptide spanning residues 96 to 102 (SSEVTES) is cleaved from the precursor.

The protein belongs to the gastrin/cholecystokinin family. In terms of tissue distribution, expressed in antrum, duodenum, colon, pancreas, brain and testis. No expression found in kidney, lung, liver, skin or distal two-thirds of small intestine. In the brain, strongly expressed in the pituitary gland with moderate expression in the neural lobe, brain stem and hypothalamus.

The protein resides in the secreted. Its function is as follows. May control digestion processes. In Aquarana catesbeiana (American bullfrog), this protein is Gastrin/cholecystokinin-like peptide (GAST).